The sequence spans 805 residues: Ubiquitin carboxyl-terminal hydrolase 5 (805 aa).

One can recognise a Rhodanese domain in the interval 159–283 (HGDALLLIDV…WVKLGGAYQS (125 aa)). The tract at residues 359-380 (RNSPTVQKFSPHPPTTLSKLNT) is disordered. Residues 446-804 (VGLENIGNCC…SAYVLFYERI (359 aa)) form the USP domain. The active-site Nucleophile is cysteine 455. Residue histidine 761 is the Proton acceptor of the active site.

This sequence belongs to the peptidase C19 family.

The catalysed reaction is Thiol-dependent hydrolysis of ester, thioester, amide, peptide and isopeptide bonds formed by the C-terminal Gly of ubiquitin (a 76-residue protein attached to proteins as an intracellular targeting signal).. The sequence is that of Ubiquitin carboxyl-terminal hydrolase 5 (UBP5) from Saccharomyces cerevisiae (strain ATCC 204508 / S288c) (Baker's yeast).